Reading from the N-terminus, the 406-residue chain is MEEPLGSPPAALSALEKNVAELTVMDVYDIASLVGHEFERVIDQHGCESIARLMPKVVRVLEILEVLVSRHHVAPELDELRLELDRLRVERMDRIEKERKHQKELELVEDVWRGEAQDLLSQIAQLQEENKQLMTNLNHKDVGFSEEEFQKQEGMSERERQVMKRLKEVVDKQRDELRAKDRELGLKNEDVEALQQQQTRLMKINHDLRHRVTVVEAQGKALIEQKVELEADLQTKEQEMGSLRAELGKLRERLQGEHSQNGEEEEAEIQPQPDGEESISDAEKAALDLKDPNRPRFTLQELRDVLHERNELKSKVFLLQEELAYYKSEEIEEENRIPQPPPITHPRTSPQPESGIKRLFSFFSRDKKRLANTQRPTHIHESFGQWAITQRDDGYTEQGQEALQHL.

A Phosphoserine modification is found at Ser-7. The region spanning Ala-10–Lys-97 is the RH1 domain. At Cys-47 the chain carries S-nitrosocysteine. A coiled-coil region spans residues Glu-76 to His-258. 2 disordered regions span residues Gln-255 to Ser-280 and Glu-330 to Ser-354. Ser-259 bears the Phosphoserine mark. Acidic residues predominate over residues Gly-262–Ser-280. The RH2 domain occupies Arg-294 to Leu-359.

This sequence belongs to the RILPL family. As to quaternary structure, interacts (when S-nitrosylated) with GAPDH. Interacts with RAB8A; interaction is dependent on the phosphorylation of 'Thr-72' of RAB8A. Interacts with RAB10 and RAB12; the interaction is dependent on the phosphorylation of 'Thr-73' of RAB10, and 'Ser-105' of RAB12. S-nitrosylation is required for the interaction with GAPDH.

It is found in the cytoplasm. It localises to the cytosol. Its subcellular location is the cell projection. The protein resides in the cilium. The protein localises to the cytoskeleton. It is found in the microtubule organizing center. It localises to the centrosome. Its subcellular location is the centriole. Its function is as follows. Neuroprotective protein, which acts by sequestring GAPDH in the cytosol and prevent the apoptotic function of GAPDH in the nucleus. Competes with SIAH1 for binding GAPDH. Does not regulate lysosomal morphology and distribution. Plays a role in the regulation of cell shape and polarity. Plays a role in cellular protein transport, including protein transport away from primary cilia. Binds to RAB10 following LRRK2-mediated RAB10 phosphorylation which leads to inhibition of ciliogenesis. The sequence is that of RILP-like protein 1 (Rilpl1) from Mus musculus (Mouse).